A 311-amino-acid polypeptide reads, in one-letter code: Replication initiation protein (311 aa).

The protein belongs to the plasmid replication initiation factor family.

Functionally, this protein is probably a specific topoisomerase involved in initiating replication. This protein is specifically required and may be rate-limiting for replication of the plasmid in vivo. The protein is Replication initiation protein (repD) of Staphylococcus aureus.